The primary structure comprises 435 residues: Uracil permease (435 aa).

12 helical membrane-spanning segments follow: residues 17 to 37 (FSWV…TILV), 42 to 62 (GMSP…YLLI), 67 to 87 (IPAY…VKAT), 91 to 111 (GAAM…ALLI), 122 to 142 (ILPP…LAST), 161 to 181 (LKHF…AIFL), 191 to 213 (LIGI…QPVL), 234 to 254 (VTLG…SEHI), 311 to 331 (VFSV…GFIG), 336 to 356 (LISS…FGII), 376 to 396 (NLII…IQVS), and 399 to 419 (GFQV…NLIL).

It belongs to the nucleobase:cation symporter-2 (NCS2) (TC 2.A.40) family.

Its subcellular location is the cell membrane. In terms of biological role, transport of uracil in the cell. The sequence is that of Uracil permease (pyrP) from Bacillus subtilis (strain 168).